A 32-amino-acid polypeptide reads, in one-letter code: uncharacterized protein (32 aa).

This is an uncharacterized protein from Enterobacteria phage T4 (Bacteriophage T4).